A 258-amino-acid chain; its full sequence is 1-(5-phosphoribosyl)-5-[(5-phosphoribosylamino)methylideneamino] imidazole-4-carboxamide isomerase (258 aa).

Asp-17 functions as the Proton acceptor in the catalytic mechanism. The active-site Proton donor is Asp-136.

It belongs to the HisA/HisF family.

Its subcellular location is the cytoplasm. It catalyses the reaction 1-(5-phospho-beta-D-ribosyl)-5-[(5-phospho-beta-D-ribosylamino)methylideneamino]imidazole-4-carboxamide = 5-[(5-phospho-1-deoxy-D-ribulos-1-ylimino)methylamino]-1-(5-phospho-beta-D-ribosyl)imidazole-4-carboxamide. It participates in amino-acid biosynthesis; L-histidine biosynthesis; L-histidine from 5-phospho-alpha-D-ribose 1-diphosphate: step 4/9. This Corynebacterium jeikeium (strain K411) protein is 1-(5-phosphoribosyl)-5-[(5-phosphoribosylamino)methylideneamino] imidazole-4-carboxamide isomerase.